We begin with the raw amino-acid sequence, 233 residues long: Small ribosomal subunit protein uS3 (233 aa).

Positions 39 to 107 (IRTFLKRKLY…EVNINIKEER (69 aa)) constitute a KH type-2 domain. The interval 211-233 (GVQPEKTEESAPAKKPRRARRGK) is disordered. The segment covering 213–222 (QPEKTEESAP) has biased composition (basic and acidic residues). Residues 224 to 233 (KKPRRARRGK) show a composition bias toward basic residues.

Belongs to the universal ribosomal protein uS3 family. As to quaternary structure, part of the 30S ribosomal subunit. Forms a tight complex with proteins S10 and S14.

In terms of biological role, binds the lower part of the 30S subunit head. Binds mRNA in the 70S ribosome, positioning it for translation. The chain is Small ribosomal subunit protein uS3 from Campylobacter lari (strain RM2100 / D67 / ATCC BAA-1060).